Here is a 315-residue protein sequence, read N- to C-terminus: GTP cyclohydrolase MptA (315 aa).

The protein belongs to the GTP cyclohydrolase IV family. Homodimer. It depends on Fe(2+) as a cofactor.

The enzyme catalyses GTP + H2O = 7,8-dihydroneopterin 2',3'-cyclic phosphate + formate + diphosphate + H(+). Its pathway is cofactor biosynthesis; 5,6,7,8-tetrahydromethanopterin biosynthesis. Its function is as follows. Converts GTP to 7,8-dihydro-D-neopterin 2',3'-cyclic phosphate, the first intermediate in the biosynthesis of coenzyme methanopterin. The chain is GTP cyclohydrolase MptA from Methanococcus maripaludis (strain DSM 14266 / JCM 13030 / NBRC 101832 / S2 / LL).